Here is a 383-residue protein sequence, read N- to C-terminus: L-Ala-D/L-Glu epimerase (383 aa).

Residues Arg68, Tyr94, and 198–200 (KVK) contribute to the substrate site. Asp224, Glu251, and Asp276 together coordinate Mg(2+). Substrate is bound by residues Lys298, 326–328 (CMT), and 348–350 (DLD).

Belongs to the mandelate racemase/muconate lactonizing enzyme family. It depends on Mg(2+) as a cofactor.

The catalysed reaction is L-alanyl-L-glutamate = L-alanyl-D-glutamate. In terms of biological role, catalyzes the epimerization of L-Ala-D-Glu to L-Ala-L-Glu and may play a role in the metabolism of the murein peptide, of which L-Ala-D-Glu is a component. Is also able to catalyze the epimerization of L-Ala-D-Asp, L-Ala-L-Glu, L-Ala-L-Ser, L-Ala-L-Pro, L-Ala-L-L-Val, L-Ala-L-Thr, L-Ala-L-Leu, L-Ala-L-Ile and L-Gly-L-Glu (in vitro). This is L-Ala-D/L-Glu epimerase from Bacteroides thetaiotaomicron (strain ATCC 29148 / DSM 2079 / JCM 5827 / CCUG 10774 / NCTC 10582 / VPI-5482 / E50).